The primary structure comprises 304 residues: Acetyl-coenzyme A carboxylase carboxyl transferase subunit beta (304 aa).

In terms of domain architecture, CoA carboxyltransferase N-terminal spans 23–292 (VWTKCDSCGQ…PNPDAPREGV (270 aa)). Zn(2+) contacts are provided by Cys-27, Cys-30, Cys-46, and Cys-49. The C4-type zinc finger occupies 27–49 (CDSCGQVLYRAELERNLEVCPKC). Positions 284-304 (NPDAPREGVVVPPAPDQESEV) are disordered.

The protein belongs to the AccD/PCCB family. As to quaternary structure, acetyl-CoA carboxylase is a heterohexamer composed of biotin carboxyl carrier protein (AccB), biotin carboxylase (AccC) and two subunits each of ACCase subunit alpha (AccA) and ACCase subunit beta (AccD). The cofactor is Zn(2+).

It localises to the cytoplasm. The enzyme catalyses N(6)-carboxybiotinyl-L-lysyl-[protein] + acetyl-CoA = N(6)-biotinyl-L-lysyl-[protein] + malonyl-CoA. It functions in the pathway lipid metabolism; malonyl-CoA biosynthesis; malonyl-CoA from acetyl-CoA: step 1/1. In terms of biological role, component of the acetyl coenzyme A carboxylase (ACC) complex. Biotin carboxylase (BC) catalyzes the carboxylation of biotin on its carrier protein (BCCP) and then the CO(2) group is transferred by the transcarboxylase to acetyl-CoA to form malonyl-CoA. The polypeptide is Acetyl-coenzyme A carboxylase carboxyl transferase subunit beta (Salmonella paratyphi A (strain ATCC 9150 / SARB42)).